The following is a 141-amino-acid chain: MADPHVLEEQFEETRSIIEELLEDGSDPDATYIIEHHFSAEDFDQLEKAAVEAFKLGYEVTDAEELETEDRVILMCCDVISESRLEVDLINAQVKQLADLAEKMGVNYDGWGTYFEDPNAPDDEDDNDDLFPPEEDEPRLH.

Residues 112–141 (GTYFEDPNAPDDEDDNDDLFPPEEDEPRLH) form a disordered region. The span at 119–141 (NAPDDEDDNDDLFPPEEDEPRLH) shows a compositional bias: acidic residues.

This sequence belongs to the RraB family. As to quaternary structure, interacts with the C-terminal region of Rne.

The protein localises to the cytoplasm. Functionally, globally modulates RNA abundance by binding to RNase E (Rne) and regulating its endonucleolytic activity. Can modulate Rne action in a substrate-dependent manner by altering the composition of the degradosome. The chain is Regulator of ribonuclease activity B from Xenorhabdus nematophila (strain ATCC 19061 / DSM 3370 / CCUG 14189 / LMG 1036 / NCIMB 9965 / AN6).